The sequence spans 328 residues: Transcription factor bHLH84 (328 aa).

The interval 145-248 is disordered; it reads QCESSKKRTR…ASRGAATDPQ (104 aa). The span at 220–229 shows a compositional bias: basic and acidic residues; that stretch reads LSKEDGEDSK. In terms of domain architecture, bHLH spans 243-292; that stretch reads AATDPQSLYARKRRERINERLRILQHLVPNGTKVDISTMLEEAVQYVKFL.

The protein belongs to the bHLH protein family. As to quaternary structure, homodimer.

The protein localises to the nucleus. In Arabidopsis thaliana (Mouse-ear cress), this protein is Transcription factor bHLH84 (BHLH84).